The chain runs to 233 residues: Large ribosomal subunit protein uL1 (233 aa).

This sequence belongs to the universal ribosomal protein uL1 family. In terms of assembly, part of the 50S ribosomal subunit.

In terms of biological role, binds directly to 23S rRNA. The L1 stalk is quite mobile in the ribosome, and is involved in E site tRNA release. Its function is as follows. Protein L1 is also a translational repressor protein, it controls the translation of the L11 operon by binding to its mRNA. The sequence is that of Large ribosomal subunit protein uL1 from Shewanella loihica (strain ATCC BAA-1088 / PV-4).